The chain runs to 210 residues: MKKEIASHLLEIGAVFLQPNDPFTWSSGMKSPIYCDNRLTLSYPKVRQAIAAGLEELIKEHFPTVEIIAGTATAGIAHAAWVSDRMDLPMCYVRSKAKGHGKGNQIEGKAEKGQKVVVVEDLISTGGSAITCVEALREAGCEVLGIVSIFTYELEAGKEKLEAANVASYSLSDYSALTEVAAEKGMIGQAETKKLQEWRKNPANEAWITA.

Residues Arg-94, Lys-98, His-100, and 120 to 128 contribute to the 5-phospho-alpha-D-ribose 1-diphosphate site; that span reads EDLISTGGS. An orotate-binding site is contributed by Ser-124.

This sequence belongs to the purine/pyrimidine phosphoribosyltransferase family. PyrE subfamily. As to quaternary structure, homodimer. The cofactor is Mg(2+).

The enzyme catalyses orotidine 5'-phosphate + diphosphate = orotate + 5-phospho-alpha-D-ribose 1-diphosphate. It functions in the pathway pyrimidine metabolism; UMP biosynthesis via de novo pathway; UMP from orotate: step 1/2. Its function is as follows. Catalyzes the transfer of a ribosyl phosphate group from 5-phosphoribose 1-diphosphate to orotate, leading to the formation of orotidine monophosphate (OMP). This is Orotate phosphoribosyltransferase from Bacillus cereus (strain ATCC 14579 / DSM 31 / CCUG 7414 / JCM 2152 / NBRC 15305 / NCIMB 9373 / NCTC 2599 / NRRL B-3711).